The following is a 397-amino-acid chain: Dual specificity mitogen-activated protein kinase kinase 2 (397 aa).

Residues 1-21 (MAPKRRPVPLIIAPTGEGQST) form a disordered region. One can recognise a Protein kinase domain in the interval 69-366 (FDPICELGAG…LKMLMGHTFI (298 aa)). Residues 75-83 (LGAGNGGVV) and lysine 98 each bind ATP. Aspartate 191 functions as the Proton acceptor in the catalytic mechanism. Serine 219 and serine 223 each carry phosphoserine; by RAF. The interval 284–306 (GGAEGHSMSPRQRPPGRPVSGHG) is disordered.

It belongs to the protein kinase superfamily. STE Ser/Thr protein kinase family. MAP kinase kinase subfamily. Post-translationally, phosphorylation on Ser/Thr by MAP kinase kinase kinases (RAF) positively regulates the kinase activity.

It catalyses the reaction L-seryl-[protein] + ATP = O-phospho-L-seryl-[protein] + ADP + H(+). The catalysed reaction is L-threonyl-[protein] + ATP = O-phospho-L-threonyl-[protein] + ADP + H(+). The enzyme catalyses L-tyrosyl-[protein] + ATP = O-phospho-L-tyrosyl-[protein] + ADP + H(+). Its function is as follows. Catalyzes the concomitant phosphorylation of a threonine and a tyrosine residue in a Thr-Glu-Tyr sequence located in MAP kinases. The chain is Dual specificity mitogen-activated protein kinase kinase 2 (map2k2) from Cyprinus carpio (Common carp).